Consider the following 30-residue polypeptide: Photosystem I reaction center subunit XII (30 aa).

Residues 7–26 form a helical membrane-spanning segment; that stretch reads IFVALLFALVSAVLAIRLGT.

This sequence belongs to the PsaM family.

It localises to the plastid. It is found in the chloroplast thylakoid membrane. This is Photosystem I reaction center subunit XII from Gracilaria tenuistipitata var. liui (Red alga).